A 637-amino-acid chain; its full sequence is Biosynthetic arginine decarboxylase (637 aa).

The residue at position 101 (K101) is an N6-(pyridoxal phosphate)lysine. Substrate is bound at residue 286–296 (FDVGGGLAVDY).

Belongs to the Orn/Lys/Arg decarboxylase class-II family. SpeA subfamily. Requires Mg(2+) as cofactor. The cofactor is pyridoxal 5'-phosphate.

It carries out the reaction L-arginine + H(+) = agmatine + CO2. It functions in the pathway amine and polyamine biosynthesis; agmatine biosynthesis; agmatine from L-arginine: step 1/1. Its function is as follows. Catalyzes the biosynthesis of agmatine from arginine. This chain is Biosynthetic arginine decarboxylase, found in Shewanella piezotolerans (strain WP3 / JCM 13877).